Here is a 330-residue protein sequence, read N- to C-terminus: 4-epi-cubebol synthase ((2E,6E)-farnesyl diphosphate cyclizing) (330 aa).

2 residues coordinate Mg(2+): Asp91 and Glu96. Residues 91–96 (DDAFCE) carry the DDXXXE motif motif. Substrate is bound at residue Arg184. Positions 230 and 234 each coordinate Mg(2+). Lys237 contacts substrate. Glu238 serves as a coordination point for Mg(2+). Residue 316–317 (RY) coordinates substrate.

Belongs to the terpene synthase family. Requires Mg(2+) as cofactor.

The catalysed reaction is (2E,6E)-farnesyl diphosphate + H2O = 4-epi-cubebol + diphosphate. It participates in secondary metabolite biosynthesis; terpenoid biosynthesis. Its function is as follows. Catalyzes the conversion of (2E,6E)-farnesyl diphosphate (FPP) to yield the bicyclic sesquiterpenol 4-epi-cubebol via a 1,10-cyclization, which requires the abstraction of the pyrophosphate from FPP to yield a (E,E)-germacradienyl cation. The only accepted substrate is (2E,6E)-farnesyl diphosphate (FPP). This chain is 4-epi-cubebol synthase ((2E,6E)-farnesyl diphosphate cyclizing), found in Streptosporangium roseum (strain ATCC 12428 / DSM 43021 / JCM 3005 / KCTC 9067 / NCIMB 10171 / NRRL 2505 / NI 9100).